A 332-amino-acid polypeptide reads, in one-letter code: Glycerol-3-phosphate dehydrogenase [NAD(P)+] (332 aa).

Residues Ser10, Trp11, Lys31, and Lys105 each coordinate NADPH. Residues Lys105, Gly136, and Ser138 each coordinate sn-glycerol 3-phosphate. Ala140 contacts NADPH. Residues Lys191, Asp244, Ser254, Arg255, and Asn256 each contribute to the sn-glycerol 3-phosphate site. Catalysis depends on Lys191, which acts as the Proton acceptor. Arg255 contributes to the NADPH binding site. 2 residues coordinate NADPH: Val279 and Glu281.

It belongs to the NAD-dependent glycerol-3-phosphate dehydrogenase family.

Its subcellular location is the cytoplasm. The catalysed reaction is sn-glycerol 3-phosphate + NAD(+) = dihydroxyacetone phosphate + NADH + H(+). The enzyme catalyses sn-glycerol 3-phosphate + NADP(+) = dihydroxyacetone phosphate + NADPH + H(+). It participates in membrane lipid metabolism; glycerophospholipid metabolism. Functionally, catalyzes the reduction of the glycolytic intermediate dihydroxyacetone phosphate (DHAP) to sn-glycerol 3-phosphate (G3P), the key precursor for phospholipid synthesis. This is Glycerol-3-phosphate dehydrogenase [NAD(P)+] from Anaeromyxobacter dehalogenans (strain 2CP-C).